Here is a 333-residue protein sequence, read N- to C-terminus: Autoinducer 2 import system permease protein LsrD (333 aa).

A run of 10 helical transmembrane segments spans residues 7 to 27, 45 to 65, 70 to 90, 91 to 111, 118 to 138, 162 to 182, 212 to 232, 240 to 260, 261 to 281, and 288 to 308; these read YGWE…FGIA, ICIG…GIDI, TIGL…PMAA, AIPL…ALIL, LVIT…LSGI, LFGL…CWLF, TLYL…IVLV, SDLG…GGAN, IYGG…IGYL, and AGVP…IAVV.

It belongs to the binding-protein-dependent transport system permease family. AraH/RbsC subfamily. The complex is composed of two ATP-binding proteins (LsrA), two transmembrane proteins (LsrC and LsrD) and a solute-binding protein (LsrB).

It is found in the cell inner membrane. Functionally, part of the ABC transporter complex LsrABCD involved in autoinducer 2 (AI-2) import. Probably responsible for the translocation of the substrate across the membrane. This chain is Autoinducer 2 import system permease protein LsrD (lsrD), found in Photorhabdus laumondii subsp. laumondii (strain DSM 15139 / CIP 105565 / TT01) (Photorhabdus luminescens subsp. laumondii).